Reading from the N-terminus, the 249-residue chain is DNA repair protein RecO (249 aa).

Belongs to the RecO family.

In terms of biological role, involved in DNA repair and RecF pathway recombination. The chain is DNA repair protein RecO from Afipia carboxidovorans (strain ATCC 49405 / DSM 1227 / KCTC 32145 / OM5) (Oligotropha carboxidovorans).